The primary structure comprises 621 residues: SH2B adapter protein 2 (621 aa).

At tyrosine 47 the chain carries Phosphotyrosine. Serine 130 carries the phosphoserine modification. The disordered stretch occupies residues 144–165 (RASPEPEGGATPKTTEPVSEPR). A PH domain is found at 186-299 (DIQREGALRF…WVADIQGCVD (114 aa)). A Phosphoserine modification is found at serine 303. One can recognise an SH2 domain in the interval 409–507 (WFHGTLSRVK…SADITLRSYV (99 aa)). 2 disordered regions span residues 507-528 (VRAQGPPPDPGPAPNTAAPVPA) and 548-609 (PPTS…ATLG). Over residues 552 to 570 (PSNGAGASSSSGSSSSATS) the composition is skewed to low complexity. Serine 597 carries the post-translational modification Phosphoserine. Tyrosine 618 carries the post-translational modification Phosphotyrosine.

Belongs to the SH2B adapter family. In terms of assembly, homodimer. Interacts with KIT/c-KIT, SHC1, EPOR, PDGFR, VAV1 and VAV3. Interacts (via N-terminal region) with SHC1. Interacts (via the phosphorylated C-terminus) with GRB2. Interacts (via its SH2 domain) with EPOR, INSR and KIT. Interacts with GRB2 after B-cell antigen receptor stimulation. Interacts (via PH domain) with VAV3. Interacts with NTRK1, NTRK2 and NTRK3 (phosphorylated); after stimulation of the receptor by its extracellular ligand and subsequent autophosphorylation of the receptor. Binds INSR, GRB2, ASB6 and CAP. Insulin stimulation leads to dissociation of CAP. Binds CBS only when SH2B2/APS has become phosphorylated. INSR binding does not depend on the phosphorylation of SH2B2/APS. Post-translationally, phosphorylated on a tyrosine residue by NTRK1, NTRK2, NTRK3 and INSR after stimulation of the receptor by its extracellular ligand. Tyrosine phosphorylated by JAK2, KIT and other kinases activated by B-cell receptor in response to stimulation with cytokines, IL3, IL5, PDGF, IGF1, IGF2, CSF2/GM-CSF and cross-linking of the B-cell receptor complex. As to expression, detected in embryonic brain, spinal cord and cortical neurons.

The protein resides in the cytoplasm. It is found in the membrane. Adapter protein for several members of the tyrosine kinase receptor family. Involved in multiple signaling pathways. Binds to EPOR and suppresses EPO-induced STAT5 activation, possibly through a masking effect on STAT5 docking sites in EPOR. Suppresses PDGF-induced mitogenesis. Involved in stimulation of glucose uptake by insulin. Involved in coupling from immunoreceptor to Ras signaling. Acts as a negative regulator of cytokine signaling in collaboration with CBL. Induces cytoskeletal reorganization and neurite outgrowth in cultured neurons. This is SH2B adapter protein 2 (Sh2b2) from Rattus norvegicus (Rat).